The sequence spans 351 residues: Holliday junction branch migration complex subunit RuvB (351 aa).

Residues 1-186 are large ATPase domain (RuvB-L); the sequence is MDEKIETRLI…FGIVQRLEFY (186 aa). Residues Ile-25, Arg-26, Gly-67, Lys-70, Thr-71, Thr-72, 133-135, Arg-176, Tyr-186, and Arg-223 contribute to the ATP site; that span reads EDF. Thr-71 contacts Mg(2+). The segment at 187-257 is small ATPAse domain (RuvB-S); that stretch reads RIPDLIHIVK…IAKEALDLLN (71 aa). Residues 260–351 are head domain (RuvB-H); the sequence is IRGLDVMDRK…ENFDLLGKVE (92 aa). Residues Arg-296, Arg-315, and Arg-320 each contribute to the DNA site.

Belongs to the RuvB family. In terms of assembly, homohexamer. Forms an RuvA(8)-RuvB(12)-Holliday junction (HJ) complex. HJ DNA is sandwiched between 2 RuvA tetramers; dsDNA enters through RuvA and exits via RuvB. An RuvB hexamer assembles on each DNA strand where it exits the tetramer. Each RuvB hexamer is contacted by two RuvA subunits (via domain III) on 2 adjacent RuvB subunits; this complex drives branch migration. In the full resolvosome a probable DNA-RuvA(4)-RuvB(12)-RuvC(2) complex forms which resolves the HJ.

It localises to the cytoplasm. It catalyses the reaction ATP + H2O = ADP + phosphate + H(+). In terms of biological role, the RuvA-RuvB-RuvC complex processes Holliday junction (HJ) DNA during genetic recombination and DNA repair, while the RuvA-RuvB complex plays an important role in the rescue of blocked DNA replication forks via replication fork reversal (RFR). RuvA specifically binds to HJ cruciform DNA, conferring on it an open structure. The RuvB hexamer acts as an ATP-dependent pump, pulling dsDNA into and through the RuvAB complex. RuvB forms 2 homohexamers on either side of HJ DNA bound by 1 or 2 RuvA tetramers; 4 subunits per hexamer contact DNA at a time. Coordinated motions by a converter formed by DNA-disengaged RuvB subunits stimulates ATP hydrolysis and nucleotide exchange. Immobilization of the converter enables RuvB to convert the ATP-contained energy into a lever motion, pulling 2 nucleotides of DNA out of the RuvA tetramer per ATP hydrolyzed, thus driving DNA branch migration. The RuvB motors rotate together with the DNA substrate, which together with the progressing nucleotide cycle form the mechanistic basis for DNA recombination by continuous HJ branch migration. Branch migration allows RuvC to scan DNA until it finds its consensus sequence, where it cleaves and resolves cruciform DNA. The polypeptide is Holliday junction branch migration complex subunit RuvB (Coxiella burnetii (strain CbuG_Q212) (Coxiella burnetii (strain Q212))).